A 103-amino-acid chain; its full sequence is Large ribosomal subunit protein uL24 (103 aa).

Belongs to the universal ribosomal protein uL24 family. As to quaternary structure, part of the 50S ribosomal subunit.

In terms of biological role, one of two assembly initiator proteins, it binds directly to the 5'-end of the 23S rRNA, where it nucleates assembly of the 50S subunit. Functionally, one of the proteins that surrounds the polypeptide exit tunnel on the outside of the subunit. The sequence is that of Large ribosomal subunit protein uL24 from Ruegeria pomeroyi (strain ATCC 700808 / DSM 15171 / DSS-3) (Silicibacter pomeroyi).